Reading from the N-terminus, the 96-residue chain is Evasin P1074 (96 aa).

Residues 1 to 28 (MAFNMITFLQMAVFVVILFNINLHSASA) form the signal peptide. 3 disulfides stabilise this stretch: Cys-48/Cys-67, Cys-52/Cys-69, and Cys-63/Cys-80. The N-linked (GlcNAc...) asparagine glycan is linked to Asn-74.

The protein resides in the secreted. Salivary chemokine-binding protein which binds to host chemokines CXCL1 and CXCL8. The protein is Evasin P1074 of Ixodes ricinus (Common tick).